The sequence spans 141 residues: Ribosome-binding factor A (141 aa).

Belongs to the RbfA family. As to quaternary structure, monomer. Binds 30S ribosomal subunits, but not 50S ribosomal subunits or 70S ribosomes.

Its subcellular location is the cytoplasm. One of several proteins that assist in the late maturation steps of the functional core of the 30S ribosomal subunit. Associates with free 30S ribosomal subunits (but not with 30S subunits that are part of 70S ribosomes or polysomes). Required for efficient processing of 16S rRNA. May interact with the 5'-terminal helix region of 16S rRNA. The sequence is that of Ribosome-binding factor A from Maricaulis maris (strain MCS10) (Caulobacter maris).